The sequence spans 472 residues: POU domain, class 5, transcription factor 1 (472 aa).

Disordered regions lie at residues 127-154 and 187-255; these read MPSE…YHLT and ISQA…LTTE. Residues 220–234 show a composition bias toward polar residues; sequence TAQNIPSAQAQSAPR. Over residues 235 to 245 the composition is skewed to low complexity; sequence SSGSSSGGCSN. Acidic residues predominate over residues 246–255; it reads SEEEETLTTE. In terms of domain architecture, POU-specific spans 249-323; the sequence is EETLTTEDLE…LLQRWLNEAE (75 aa). Residues 343–402 constitute a DNA-binding region (homeobox); sequence KRKRRTSLEGTVRSALESYFVKCPKPNTLEITHISDDLGLERDVVRVWFCNRRQKGKRLA.

The protein belongs to the POU transcription factor family. Class-7 subfamily.

It localises to the nucleus. Its function is as follows. Involved in early development of embryos, especially in the process of gastrulation. May play an important role in establishing and specifying rhombomeric segments. Seems to be required to maintain the cells in a highly undifferentiated state. In contrast to POU2, T-POU2 lacks DNA-binding activity because of its incomplete pou domain structure. Overexpression of POU2 does not have any effect on development, whereas overexpression of t-POU2 causes developmental retardation or arrest before gastrulation. The chain is POU domain, class 5, transcription factor 1 (pou5f1) from Danio rerio (Zebrafish).